Here is a 599-residue protein sequence, read N- to C-terminus: Aspartate--tRNA(Asp/Asn) ligase (599 aa).

L-aspartate is bound at residue E173. An aspartate region spans residues 197–200 (QLYK). An L-aspartate-binding site is contributed by R219. ATP contacts are provided by residues 219–221 (RDE) and Q228. Residue H451 coordinates L-aspartate. Residue E484 participates in ATP binding. R491 is an L-aspartate binding site. Residue 536–539 (GLDR) participates in ATP binding.

This sequence belongs to the class-II aminoacyl-tRNA synthetase family. Type 1 subfamily. In terms of assembly, homodimer.

It localises to the cytoplasm. It carries out the reaction tRNA(Asx) + L-aspartate + ATP = L-aspartyl-tRNA(Asx) + AMP + diphosphate. In terms of biological role, aspartyl-tRNA synthetase with relaxed tRNA specificity since it is able to aspartylate not only its cognate tRNA(Asp) but also tRNA(Asn). Reaction proceeds in two steps: L-aspartate is first activated by ATP to form Asp-AMP and then transferred to the acceptor end of tRNA(Asp/Asn). In Methylococcus capsulatus (strain ATCC 33009 / NCIMB 11132 / Bath), this protein is Aspartate--tRNA(Asp/Asn) ligase.